A 960-amino-acid chain; its full sequence is CWF19-like protein 2 (960 aa).

Disordered regions lie at residues 1–222, 261–552, 624–648, and 712–731; these read MAAY…AGVV, EFQK…ELIL, AWPV…AIET, and AQKE…AVQE. Positions 13 to 101 form a coiled coil; that stretch reads SIKSRKESKR…KKAKKEKKDE (89 aa). Residues 16–52 show a composition bias toward basic and acidic residues; the sequence is SRKESKREERERVIQKAKEKFEKEERRKAERKARGED. A compositionally biased stretch (basic residues) spans 73 to 96; that stretch reads KTKKAKKEKKAKKSKKEKKKKAKK. Positions 108-117 are enriched in acidic residues; the sequence is SSEDSEDEWV. Positions 135-146 are enriched in low complexity; that stretch reads EATPSSSSASNN. A coiled-coil region spans residues 163-279; sequence SVADRRAQKE…EDAAYGERRD (117 aa). Basic and acidic residues-rich tracts occupy residues 165-181, 261-372, and 404-417; these read ADRR…ERQK, EFQK…DDLS, and KPVD…EAGF. Positions 507 to 518 are enriched in polar residues; that stretch reads SAVQDSETPTLQ. Residues 540-605 adopt a coiled-coil conformation; sequence SESEEEEEEE…IKDQSKRASK (66 aa). Residues 541 to 552 are compositionally biased toward acidic residues; sequence ESEEEEEEELIL. Over residues 713 to 731 the composition is skewed to basic and acidic residues; the sequence is QKERAGRDEERQRNKAVQE.

It belongs to the CWF19 family.

The sequence is that of CWF19-like protein 2 (cwf19l2) from Danio rerio (Zebrafish).